Reading from the N-terminus, the 261-residue chain is uncharacterized protein (261 aa).

A signal peptide spans 1–22; it reads MKYYGKCISYISILILTFFIGG. Cysteine 23 carries N-palmitoyl cysteine lipidation. Cysteine 23 is lipidated: S-diacylglycerol cysteine.

The protein belongs to the staphylococcal tandem lipoprotein family.

Its subcellular location is the cell membrane. This is an uncharacterized protein from Staphylococcus epidermidis (strain ATCC 12228 / FDA PCI 1200).